The primary structure comprises 558 residues: Dihydroxy-acid dehydratase (558 aa).

Cysteine 49 is a [2Fe-2S] cluster binding site. Residue aspartate 81 coordinates Mg(2+). Residue cysteine 122 participates in [2Fe-2S] cluster binding. Positions 123 and 124 each coordinate Mg(2+). N6-carboxylysine is present on lysine 124. Residue cysteine 194 participates in [2Fe-2S] cluster binding. Glutamate 446 serves as a coordination point for Mg(2+). Serine 472 functions as the Proton acceptor in the catalytic mechanism.

It belongs to the IlvD/Edd family. As to quaternary structure, homodimer. [2Fe-2S] cluster is required as a cofactor. Mg(2+) serves as cofactor.

It catalyses the reaction (2R)-2,3-dihydroxy-3-methylbutanoate = 3-methyl-2-oxobutanoate + H2O. The enzyme catalyses (2R,3R)-2,3-dihydroxy-3-methylpentanoate = (S)-3-methyl-2-oxopentanoate + H2O. It functions in the pathway amino-acid biosynthesis; L-isoleucine biosynthesis; L-isoleucine from 2-oxobutanoate: step 3/4. Its pathway is amino-acid biosynthesis; L-valine biosynthesis; L-valine from pyruvate: step 3/4. Functionally, functions in the biosynthesis of branched-chain amino acids. Catalyzes the dehydration of (2R,3R)-2,3-dihydroxy-3-methylpentanoate (2,3-dihydroxy-3-methylvalerate) into 2-oxo-3-methylpentanoate (2-oxo-3-methylvalerate) and of (2R)-2,3-dihydroxy-3-methylbutanoate (2,3-dihydroxyisovalerate) into 2-oxo-3-methylbutanoate (2-oxoisovalerate), the penultimate precursor to L-isoleucine and L-valine, respectively. The chain is Dihydroxy-acid dehydratase from Synechococcus sp. (strain RCC307).